Reading from the N-terminus, the 134-residue chain is MRMHLHLTLVALGAAYVCANAVESTMNRLVAETLTLLSSHRTLLIGDGNLMIPTPQHTNHQLCIEEVFQGIDTLKNQTAQGDAVKKIFQNLSLIKEYIDLQKRKCGGERWRVKQFLDYLQVFLGVINTEWTMES.

The N-terminal stretch at methionine 1 to alanine 21 is a signal peptide. N-linked (GlcNAc...) asparagine glycosylation is found at asparagine 76 and asparagine 90.

This sequence belongs to the IL-5 family. Homodimer; disulfide-linked. Interacts with IL5RA. Interacts with CSF2RB.

The protein localises to the secreted. Its function is as follows. Homodimeric cytokine expressed predominantly by T-lymphocytes and NK cells that plays an important role in the survival, differentiation, and chemotaxis of eosinophils. Also acts on activated and resting B-cells to induce immunoglobulin production, growth, and differentiation. Mechanistically, exerts its biological effects through a receptor composed of IL5RA subunit and the cytokine receptor common subunit beta/CSF2RB. Binding to the receptor leads to activation of various kinases including LYN, SYK and JAK2 and thereby propagates signals through the RAS-MAPK and JAK-STAT5 pathways respectively. The protein is Interleukin-5 (IL5) of Bos taurus (Bovine).